We begin with the raw amino-acid sequence, 441 residues long: Ribulose bisphosphate carboxylase large chain (441 aa).

At Lys5 the chain carries N6,N6,N6-trimethyllysine. Thr164 contributes to the substrate binding site. Lys166 functions as the Proton acceptor in the catalytic mechanism. Lys168 contacts substrate. Residues Lys192, Asp194, and Glu195 each contribute to the Mg(2+) site. Lys192 bears the N6-carboxylysine mark. His285 (proton acceptor) is an active-site residue. Substrate contacts are provided by Arg286, His318, and Ser370.

Belongs to the RuBisCO large chain family. Type I subfamily. Heterohexadecamer of 8 large chains and 8 small chains; disulfide-linked. The disulfide link is formed within the large subunit homodimers. Mg(2+) serves as cofactor. Post-translationally, the disulfide bond which can form in the large chain dimeric partners within the hexadecamer appears to be associated with oxidative stress and protein turnover.

The protein localises to the plastid. The protein resides in the chloroplast. The catalysed reaction is 2 (2R)-3-phosphoglycerate + 2 H(+) = D-ribulose 1,5-bisphosphate + CO2 + H2O. It carries out the reaction D-ribulose 1,5-bisphosphate + O2 = 2-phosphoglycolate + (2R)-3-phosphoglycerate + 2 H(+). In terms of biological role, ruBisCO catalyzes two reactions: the carboxylation of D-ribulose 1,5-bisphosphate, the primary event in carbon dioxide fixation, as well as the oxidative fragmentation of the pentose substrate in the photorespiration process. Both reactions occur simultaneously and in competition at the same active site. The protein is Ribulose bisphosphate carboxylase large chain of Hemionitis engywookii (Fendler's false cloak fern).